We begin with the raw amino-acid sequence, 196 residues long: UPF0301 protein BF2109 (196 aa).

This sequence belongs to the UPF0301 (AlgH) family.

This chain is UPF0301 protein BF2109, found in Bacteroides fragilis (strain ATCC 25285 / DSM 2151 / CCUG 4856 / JCM 11019 / LMG 10263 / NCTC 9343 / Onslow / VPI 2553 / EN-2).